Here is a 367-residue protein sequence, read N- to C-terminus: Chorismate synthase (367 aa).

Position 48 (arginine 48) interacts with NADP(+). FMN is bound by residues 125–127 (RAS), glycine 290, 305–309 (KPTSS), and arginine 333.

The protein belongs to the chorismate synthase family. As to quaternary structure, homotetramer. It depends on FMNH2 as a cofactor.

It catalyses the reaction 5-O-(1-carboxyvinyl)-3-phosphoshikimate = chorismate + phosphate. The protein operates within metabolic intermediate biosynthesis; chorismate biosynthesis; chorismate from D-erythrose 4-phosphate and phosphoenolpyruvate: step 7/7. Functionally, catalyzes the anti-1,4-elimination of the C-3 phosphate and the C-6 proR hydrogen from 5-enolpyruvylshikimate-3-phosphate (EPSP) to yield chorismate, which is the branch point compound that serves as the starting substrate for the three terminal pathways of aromatic amino acid biosynthesis. This reaction introduces a second double bond into the aromatic ring system. The chain is Chorismate synthase from Protochlamydia amoebophila (strain UWE25).